Reading from the N-terminus, the 136-residue chain is Galectin-7 (136 aa).

Residues 6–136 enclose the Galectin domain; the sequence is HKTPLPQGVR…DVQLHSVKIF (131 aa). 70 to 76 lines the a beta-D-galactoside pocket; that stretch reads WGREERG.

As to quaternary structure, monomer.

Its subcellular location is the cytoplasm. It localises to the nucleus. The protein resides in the secreted. Its function is as follows. Could be involved in cell-cell and/or cell-matrix interactions necessary for normal growth control. Pro-apoptotic protein that functions intracellularly upstream of JNK activation and cytochrome c release. This is Galectin-7 (Lgals7) from Rattus norvegicus (Rat).